The chain runs to 454 residues: Probable 1,4-beta-D-glucan cellobiohydrolase C (454 aa).

An N-terminal signal peptide occupies residues 1–19 (MKHLASSIALTLLLPAVQA). Residues 20–55 (QQTVWGQCGGQGWSGPTSCVAGAACSTLNPYYAQCI) enclose the CBM1 domain. Cystine bridges form between cysteine 27–cysteine 44 and cysteine 38–cysteine 54. 2 thr-rich linker regions span residues 59 to 94 (TATSTTLTTTTAATTTSQTTTKPTTTGPTTSAPTVT) and 95 to 454 (ASGN…NPSF). Residues 68–95 (TTAATTTSQTTTKPTTTGPTTSAPTVTA) form a disordered region. Residue aspartate 184 is part of the active site. 2 cysteine pairs are disulfide-bonded: cysteine 185-cysteine 244 and cysteine 376-cysteine 423. Aspartate 230 acts as the Proton donor in catalysis. Aspartate 409 serves as the catalytic Nucleophile. N-linked (GlcNAc...) asparagine glycosylation occurs at asparagine 413.

It belongs to the glycosyl hydrolase 6 (cellulase B) family.

The protein resides in the secreted. The enzyme catalyses Hydrolysis of (1-&gt;4)-beta-D-glucosidic linkages in cellulose and cellotetraose, releasing cellobiose from the non-reducing ends of the chains.. Its function is as follows. The biological conversion of cellulose to glucose generally requires three types of hydrolytic enzymes: (1) Endoglucanases which cut internal beta-1,4-glucosidic bonds; (2) Exocellobiohydrolases that cut the disaccharide cellobiose from the non-reducing end of the cellulose polymer chain; (3) Beta-1,4-glucosidases which hydrolyze the cellobiose and other short cello-oligosaccharides to glucose. This is Probable 1,4-beta-D-glucan cellobiohydrolase C (cbhC) from Aspergillus fumigatus (strain CBS 144.89 / FGSC A1163 / CEA10) (Neosartorya fumigata).